The sequence spans 619 residues: Mitochondrial Rho GTPase 1-A (619 aa).

The Cytoplasmic portion of the chain corresponds to 1–593 (MRKDVRILLV…TQADLKNSTF (593 aa)). One can recognise a Miro 1 domain in the interval 2–168 (RKDVRILLVG…FYYAQKAVLH (167 aa)). The GTP site is built by Lys-14, Gly-16, Lys-17, Thr-18, and Ser-19. Residue Thr-18 participates in Mg(2+) binding. Mg(2+)-binding residues include Pro-35 and Asp-57. Positions 59, 118, 119, 121, 149, and 150 each coordinate GTP. 2 EF-hand domains span residues 184-219 (SCIK…CFNI) and 304-339 (NAYL…FPYM). Asp-197, Asp-199, Asp-201, Glu-208, Asp-317, Asp-319, Asp-321, Ala-323, and Glu-328 together coordinate Ca(2+). Residues 416 to 580 (RSVFRCNVLG…YTKLTTMAMY (165 aa)) enclose the Miro 2 domain. Residues Arg-427, Cys-429, Gly-430, Lys-431, Ser-432, Gly-433, Lys-447, Lys-529, Asp-531, Thr-559, and Cys-560 each contribute to the GTP site. Arg-427 lines the Mg(2+) pocket. Residues 594 to 616 (WLRASVGATVFAVLGFAMYKALL) traverse the membrane as a helical; Anchor for type IV membrane protein segment. Residues 617–619 (KQR) are Mitochondrial intermembrane-facing.

Belongs to the mitochondrial Rho GTPase family. Homodimer.

It is found in the mitochondrion outer membrane. It catalyses the reaction GTP + H2O = GDP + phosphate + H(+). It carries out the reaction ATP + H2O = ADP + phosphate + H(+). The catalysed reaction is UTP + H2O = UDP + phosphate + H(+). In terms of biological role, atypical mitochondrial nucleoside-triphosphatase (NTPase) involved in mitochondrial trafficking. Probably involved in control of anterograde transport of mitochondria and their subcellular distribution. Can hydrolyze GTP, ATP and UTP. The chain is Mitochondrial Rho GTPase 1-A (rhot1a) from Danio rerio (Zebrafish).